A 214-amino-acid chain; its full sequence is Urease accessory protein UreF (214 aa).

A disordered region spans residues 70–95; that stretch reads AAAGEAGDAETDARTPSPAARAASRA. A compositionally biased stretch (low complexity) spans 83 to 95; the sequence is RTPSPAARAASRA.

The protein belongs to the UreF family. UreD, UreF and UreG form a complex that acts as a GTP-hydrolysis-dependent molecular chaperone, activating the urease apoprotein by helping to assemble the nickel containing metallocenter of UreC. The UreE protein probably delivers the nickel.

It localises to the cytoplasm. Its function is as follows. Required for maturation of urease via the functional incorporation of the urease nickel metallocenter. This chain is Urease accessory protein UreF, found in Mycolicibacterium vanbaalenii (strain DSM 7251 / JCM 13017 / BCRC 16820 / KCTC 9966 / NRRL B-24157 / PYR-1) (Mycobacterium vanbaalenii).